We begin with the raw amino-acid sequence, 310 residues long: Mitochondrial citrate transporter E (310 aa).

Solcar repeat units follow at residues 2–95, 107–199, and 208–293; these read STTT…LRQG, QSLG…AKRR, and DGPG…TNKI. A run of 6 helical transmembrane segments spans residues 8–28, 72–92, 114–133, 178–198, 211–228, and 265–286; these read FIAG…FETV, GSAY…YEPL, LAGA…FFLV, AMVR…FAKR, GLHL…CCVM, and IYKG…TLSL.

This sequence belongs to the mitochondrial carrier (TC 2.A.29) family.

It localises to the mitochondrion inner membrane. Mitochondrial transporter that does not mediate citrate export from mitochondria to cytoplasm. Its exact function has still to be determined. The chain is Mitochondrial citrate transporter E from Aspergillus niger (strain ATCC 1015 / CBS 113.46 / FGSC A1144 / LSHB Ac4 / NCTC 3858a / NRRL 328 / USDA 3528.7).